The primary structure comprises 242 residues: Caffeoyl-CoA O-methyltransferase 2 (242 aa).

Lys16 contributes to the substrate binding site. Residues Thr58, Glu80, 82-83 (GV), Ser88, Asp106, and Ala135 each bind S-adenosyl-L-methionine. Position 158 (Asp158) interacts with substrate. Residue Asp158 participates in a divalent metal cation binding. Asp160 is a binding site for S-adenosyl-L-methionine. A divalent metal cation contacts are provided by Asp184 and Asn185. A substrate-binding site is contributed by Asn189.

This sequence belongs to the class I-like SAM-binding methyltransferase superfamily. Cation-dependent O-methyltransferase family. CCoAMT subfamily. Requires a divalent metal cation as cofactor. As to expression, mostly expressed in petal limbs and tubes, and, at low levels, in stems, roots and leaves.

It is found in the cytoplasm. It localises to the cytosol. The catalysed reaction is (E)-caffeoyl-CoA + S-adenosyl-L-methionine = (E)-feruloyl-CoA + S-adenosyl-L-homocysteine + H(+). It carries out the reaction (E)-5-hydroxyferuloyl-CoA + S-adenosyl-L-methionine = (E)-sinapoyl-CoA + S-adenosyl-L-homocysteine + H(+). It functions in the pathway aromatic compound metabolism; phenylpropanoid biosynthesis. Functionally, involved in the production of floral volatile phenylpropanoids in flowers of fragrant cultivars (e.g. cv. Mitchell and cv. V26) from cinnamic acid, a common precursor with the anthocyanin biosynthesis pathway involved in flower pigmentation. Methylates caffeoyl-CoA to feruloyl-CoA, also able to methylate 5-hydroxyferuloyl-CoA. This Petunia hybrida (Petunia) protein is Caffeoyl-CoA O-methyltransferase 2.